Consider the following 262-residue polypeptide: MDGKLRADEVAVTKSILKSTFNMWMDIIDVDVVIIGAGPSGLTAAKYLAQNGVKTVVLERHLSFGGGTWGGGMGFPNIVVEKPADEILREAGIKLDEVDGEDELFTADSVEVPAKLGVAAIDAGAKILTGIVVEDLILKEDKIAGVVIQSYAIEKAGLHIDPLTISAKYVIDSTGHDASAVHTLARKNKDLGIEVPGEKSMWAEKGENSLTRNTREIFPGLYVCGMAANAYHAGYRMGAIFGGMYLSGKKCAEMILEKLENK.

Residues Ser-40, 59–60 (ER), Gly-67, Val-133, and 159–161 (HID) each bind NAD(+). Fe cation contacts are provided by Asp-161 and His-176. Residues Ser-179 and Met-226 each coordinate NAD(+). Arg-236 contributes to the glycine binding site.

This sequence belongs to the THI4 family. In terms of assembly, homooctamer; tetramer of dimers. Requires Fe(2+) as cofactor.

The catalysed reaction is hydrogen sulfide + glycine + NAD(+) = ADP-5-ethyl-4-methylthiazole-2-carboxylate + nicotinamide + 3 H2O + H(+). It functions in the pathway cofactor biosynthesis; thiamine diphosphate biosynthesis. Functionally, involved in the biosynthesis of the thiazole moiety of thiamine. Catalyzes the conversion of NAD and glycine to adenosine diphosphate 5-(2-hydroxyethyl)-4-methylthiazole-2-carboxylate (ADT), an adenylated thiazole intermediate, using free sulfide as a source of sulfur. The protein is Thiamine thiazole synthase of Methanococcus maripaludis (strain C7 / ATCC BAA-1331).